A 524-amino-acid polypeptide reads, in one-letter code: Excitatory amino acid transporter 3 (524 aa).

Residues 1-18 (MGKPARKGCDSKRFLKNN) lie on the Cytoplasmic side of the membrane. The chain crosses the membrane as a helical span at residues 19–38 (WLLLSTVVAVVLGIVIGVLV). Topologically, residues 39–61 (REYSNLSTLDKFYFAFPGEILMR) are extracellular. N-linked (GlcNAc...) asparagine glycosylation is present at asparagine 43. A helical membrane pass occupies residues 62 to 82 (MLKLVILPLIVSSMITGVAAL). At 83–93 (DSNVSGKIGLR) the chain is on the cytoplasmic side. A helical membrane pass occupies residues 94 to 114 (AVLYYFCTTIIAVILGIVLVV). Residues tyrosine 98, threonine 101, and threonine 102 each coordinate Na(+). At 115–205 (SIKPGVTQKV…RTKEYRVVGL (91 aa)) the chain is on the extracellular side. Asparagine 178 and asparagine 195 each carry an N-linked (GlcNAc...) asparagine glycan. The helical transmembrane segment at 206 to 229 (YSDGINVLGLIVFCLVFGLVIGKM) threads the bilayer. The Cytoplasmic segment spans residues 230-238 (GEKGQILVD). Residues 239 to 266 (FFNALSDATMKIVQIIMCYMPLGILFLI) traverse the membrane as a helical segment. At 267–286 (AGKIIEVEDWEIFRKLGLYM) the chain is on the extracellular side. Residues 287–308 (VTVLSGLAIHSIVILPLIYFIV) form a helical membrane-spanning segment. Topologically, residues 309 to 313 (VRKNP) are cytoplasmic. Positions 314 to 344 (FRFAMGMTQALLTALMISSSSATLPVTFRCA) form an intramembrane region, discontinuously helical. The L-aspartate site is built by serine 331 and serine 333. The Cytoplasmic segment spans residues 345 to 353 (EEKNRVDKR). The chain crosses the membrane as a helical span at residues 354–380 (ITRFVLPVGATINMDGTALYEAVAAVF). Residues glycine 362, threonine 364, asparagine 366, and aspartate 368 each coordinate Na(+). Threonine 370 lines the L-aspartate pocket. Residues 381–393 (IAQLNDMDLSIGQ) are Extracellular-facing. Positions 394-427 (IITISVTATAASIGAAGVPQAGLVTMVIVLSAVG) form an intramembrane region, discontinuously helical. Na(+)-binding residues include serine 405, isoleucine 406, and alanine 408. Valine 411 contacts L-aspartate. Residues 428-440 (LPAEDVTLIIAVD) are Extracellular-facing. The helical transmembrane segment at 441-462 (WLLDRFRTVVNVLGDAFGTGIV) threads the bilayer. The L-aspartate site is built by arginine 447, threonine 448, and asparagine 451. 2 residues coordinate Na(+): asparagine 451 and aspartate 455. The Cytoplasmic portion of the chain corresponds to 463-524 (EKLSKKELEQ…TISFTQTSQF (62 aa)). A phosphoserine mark is found at serine 517 and serine 522.

This sequence belongs to the dicarboxylate/amino acid:cation symporter (DAACS) (TC 2.A.23) family. SLC1A1 subfamily. In terms of assembly, homotrimer. Interacts with ARL6IP5. Interacts with RTN2 (via N-terminus); the interaction promotes cell surface expression of SLC1A1. Interacts with SORCS2; this interaction is important for normal expression at the cell membrane. In terms of tissue distribution, brain, but also small intestine, kidney, liver and heart.

The protein resides in the cell membrane. The protein localises to the apical cell membrane. Its subcellular location is the synapse. It is found in the synaptosome. It localises to the early endosome membrane. The protein resides in the late endosome membrane. The protein localises to the recycling endosome membrane. It catalyses the reaction K(+)(in) + L-glutamate(out) + 3 Na(+)(out) + H(+)(out) = K(+)(out) + L-glutamate(in) + 3 Na(+)(in) + H(+)(in). It carries out the reaction K(+)(in) + L-aspartate(out) + 3 Na(+)(out) + H(+)(out) = K(+)(out) + L-aspartate(in) + 3 Na(+)(in) + H(+)(in). The catalysed reaction is D-aspartate(out) + K(+)(in) + 3 Na(+)(out) + H(+)(out) = D-aspartate(in) + K(+)(out) + 3 Na(+)(in) + H(+)(in). The enzyme catalyses K(+)(in) + L-cysteine(out) + 3 Na(+)(out) + H(+)(out) = K(+)(out) + L-cysteine(in) + 3 Na(+)(in) + H(+)(in). In terms of biological role, sodium-dependent, high-affinity amino acid transporter that mediates the uptake of L-glutamate and also L-aspartate and D-aspartate. Can also transport L-cysteine. Functions as a symporter that transports one amino acid molecule together with two or three Na(+) ions and one proton, in parallel with the counter-transport of one K(+) ion. Mediates Cl(-) flux that is not coupled to amino acid transport; this avoids the accumulation of negative charges due to aspartate and Na(+) symport. Plays an important role in L-glutamate and L-aspartate reabsorption in renal tubuli. Plays a redundant role in the rapid removal of released glutamate from the synaptic cleft, which is essential for terminating the postsynaptic action of glutamate. Contributes to glutathione biosynthesis and protection against oxidative stress via its role in L-glutamate and L-cysteine transport. Negatively regulated by ARL6IP5. The sequence is that of Excitatory amino acid transporter 3 (SLC1A1) from Oryctolagus cuniculus (Rabbit).